Reading from the N-terminus, the 643-residue chain is MPIITLPDGSQRQFDNPVSVMEVAQSIGAGLAKATIAGRVNGERRDACDIISEDSSLEIITAKDEDGLEIIRHSCAHLLGHAIKQLFPNVKMAIGPTIDNGFYYDVDLDRSLTQEDLDAIEKRMLELAKTNYDVVKKRVSWQEARDTFEKRGEPYKMAILDENIERTATPALYHHEEYIDMCRGPHVPNMRFCHHFKLQKVAGAYWRGDSKNKMLQRIYGTAWADKKQLAEYLTRLEEAAKRDHRRIGKALDLYHMQEEAPGLVFWHNDGWTIFRELETFVRTKLKEYDYQEVKGPFMMDRVLWERTGHWQNYADLMFTTQSENREYAIKPMNCPGHVQIFNQGLKSYRDLPIRMAEFGSCHRNEPSGSLHGLMRVRGFTQDDAHIFCTEDQIESEVTSCIRMVYDIYSTFGFSNIQVKLSTRPENRIGDDAMWDRAEDGLAKALTANGLSYEIQEGEGAFYGPKIEFALRDCLDREWQCGTIQLDFALPGRLDASYVAEDNGRRTPVMIHRAILGSIERFIGIITEEYAGFFPTWLAPTQAVVMNITDSQADYVQKVTKALSDAGIRVKSDLRNEKVGFKVREHTLRRVPYMLVCGDKEIEAGKVSVRTRKGADLGTFTIDEFVEILKNQVKARGLKLLGEE.

In terms of domain architecture, TGS spans 1–61 (MPIITLPDGS…SEDSSLEIIT (61 aa)). Residues 243–534 (DHRRIGKALD…ITEEYAGFFP (292 aa)) form a catalytic region. The Zn(2+) site is built by cysteine 334, histidine 385, and histidine 511.

Belongs to the class-II aminoacyl-tRNA synthetase family. As to quaternary structure, homodimer. The cofactor is Zn(2+).

Its subcellular location is the cytoplasm. The enzyme catalyses tRNA(Thr) + L-threonine + ATP = L-threonyl-tRNA(Thr) + AMP + diphosphate + H(+). Its function is as follows. Catalyzes the attachment of threonine to tRNA(Thr) in a two-step reaction: L-threonine is first activated by ATP to form Thr-AMP and then transferred to the acceptor end of tRNA(Thr). Also edits incorrectly charged L-seryl-tRNA(Thr). The chain is Threonine--tRNA ligase from Actinobacillus pleuropneumoniae serotype 5b (strain L20).